The sequence spans 480 residues: Probable tRNA N6-adenosine threonylcarbamoyltransferase, mitochondrial (480 aa).

The N-terminal 86 residues, 1-86 (MVRLFLTLSP…NPNFDDNLVV (86 aa)), are a transit peptide targeting the mitochondrion. Residues His194 and His198 each contribute to the a divalent metal cation site. Substrate-binding positions include 217-221 (LISGG), Asp250, Gly265, Glu269, 373-374 (SN), and Thr401. Asp402 contributes to the a divalent metal cation binding site.

The protein belongs to the KAE1 / TsaD family. Homodimer. A divalent metal cation is required as a cofactor. As to expression, expressed in young developing leaves, roots, flowers and siliques.

The protein resides in the mitochondrion inner membrane. The catalysed reaction is L-threonylcarbamoyladenylate + adenosine(37) in tRNA = N(6)-L-threonylcarbamoyladenosine(37) in tRNA + AMP + H(+). In terms of biological role, required for the formation of a threonylcarbamoyl group on adenosine at position 37 (t(6)A37) in mitochondrial tRNAs that read codons beginning with adenine. Probably involved in the transfer of the threonylcarbamoyl moiety of threonylcarbamoyl-AMP (TC-AMP) to the N6 group of A37. Involved in mitochondrial genome maintenance. May have a role in embryonic development in plants. In Arabidopsis thaliana (Mouse-ear cress), this protein is Probable tRNA N6-adenosine threonylcarbamoyltransferase, mitochondrial.